A 491-amino-acid chain; its full sequence is UDP-N-acetylmuramoyl-L-alanyl-D-glutamate--2,6-diaminopimelate ligase (491 aa).

Ser-30 is a UDP-N-acetyl-alpha-D-muramoyl-L-alanyl-D-glutamate binding site. 108 to 114 (GTNGKTT) is an ATP binding site. UDP-N-acetyl-alpha-D-muramoyl-L-alanyl-D-glutamate contacts are provided by residues Asn-149, 150 to 151 (TT), Ser-177, and Arg-185. Lys-217 bears the N6-carboxylysine mark. Residues Arg-383, 407 to 410 (DNPR), Gly-457, and Glu-461 contribute to the meso-2,6-diaminopimelate site. Positions 407–410 (DNPR) match the Meso-diaminopimelate recognition motif motif.

The protein belongs to the MurCDEF family. MurE subfamily. Requires Mg(2+) as cofactor. Carboxylation is probably crucial for Mg(2+) binding and, consequently, for the gamma-phosphate positioning of ATP.

Its subcellular location is the cytoplasm. It catalyses the reaction UDP-N-acetyl-alpha-D-muramoyl-L-alanyl-D-glutamate + meso-2,6-diaminopimelate + ATP = UDP-N-acetyl-alpha-D-muramoyl-L-alanyl-gamma-D-glutamyl-meso-2,6-diaminopimelate + ADP + phosphate + H(+). It functions in the pathway cell wall biogenesis; peptidoglycan biosynthesis. Functionally, catalyzes the addition of meso-diaminopimelic acid to the nucleotide precursor UDP-N-acetylmuramoyl-L-alanyl-D-glutamate (UMAG) in the biosynthesis of bacterial cell-wall peptidoglycan. The protein is UDP-N-acetylmuramoyl-L-alanyl-D-glutamate--2,6-diaminopimelate ligase of Bacillus cereus (strain ATCC 14579 / DSM 31 / CCUG 7414 / JCM 2152 / NBRC 15305 / NCIMB 9373 / NCTC 2599 / NRRL B-3711).